The sequence spans 347 residues: Terpene synthase 2 (347 aa).

The Mg(2+) site is built by Asp103, Asn247, Ser251, and Glu255. The short motif at Asp103 to Glu107 is the D(D/E)XX(D/E) motif element. The NSE motif motif lies at Asn247–Glu255. Positions Trp329 to Tyr336 match the WxxxxxRY motif motif.

Belongs to the terpene synthase family. Requires Mg(2+) as cofactor.

Terpene synthase that may be involved in the production of volatile terpenoids. Does not show detectable terpene products with either farnesyl diphosphate (FPP) or geranyl diphosphate (GPP). P.polycephalum has a unique biology and these volatile terpenoids could function in internal communication of P.polycephalum, to mark the territory that have been explored, or they may be involved in chemotaxis. The chain is Terpene synthase 2 from Physarum polycephalum (Slime mold).